Consider the following 383-residue polypeptide: 1-deoxy-D-xylulose 5-phosphate reductoisomerase (383 aa).

Positions 10, 11, 12, 13, 36, 37, 38, and 122 each coordinate NADPH. K123 lines the 1-deoxy-D-xylulose 5-phosphate pocket. Position 124 (E124) interacts with NADPH. D148 lines the Mn(2+) pocket. The 1-deoxy-D-xylulose 5-phosphate site is built by S149, E150, S174, and H197. E150 serves as a coordination point for Mn(2+). G203 contacts NADPH. Residues S210, N215, K216, and E219 each contribute to the 1-deoxy-D-xylulose 5-phosphate site. E219 contributes to the Mn(2+) binding site.

This sequence belongs to the DXR family. Mg(2+) serves as cofactor. Requires Mn(2+) as cofactor.

It catalyses the reaction 2-C-methyl-D-erythritol 4-phosphate + NADP(+) = 1-deoxy-D-xylulose 5-phosphate + NADPH + H(+). Its pathway is isoprenoid biosynthesis; isopentenyl diphosphate biosynthesis via DXP pathway; isopentenyl diphosphate from 1-deoxy-D-xylulose 5-phosphate: step 1/6. In terms of biological role, catalyzes the NADPH-dependent rearrangement and reduction of 1-deoxy-D-xylulose-5-phosphate (DXP) to 2-C-methyl-D-erythritol 4-phosphate (MEP). The protein is 1-deoxy-D-xylulose 5-phosphate reductoisomerase of Bacillus subtilis (strain 168).